Reading from the N-terminus, the 94-residue chain is Neutrophil antibiotic peptide NP-2 (94 aa).

Positions 1-19 are cleaved as a signal peptide; sequence MRTLTLLTALLLLALHTQA. The propeptide occupies 20–62; the sequence is KSPQGTAEEAPDQEQLVMEDQDISISFGGDKGTALQDADVKAG. Cystine bridges form between Cys-65–Cys-93, Cys-67–Cys-82, and Cys-72–Cys-92.

The protein belongs to the alpha-defensin family. As to expression, highest expression in bone marrow and to a much lesser extent in small intestine.

The protein localises to the secreted. Active in vitro against S.aureus, fungi, Gram-positive and Gram-negative bacteria and to a lesser extent against an enveloped virus. The sequence is that of Neutrophil antibiotic peptide NP-2 (Defa) from Rattus norvegicus (Rat).